The following is a 131-amino-acid chain: Profilin-5 (131 aa).

Residues C13 and C115 are joined by a disulfide bond. The short motif at 81–97 (AVIRGKKGAGGITIKKT) is the Involved in PIP2 interaction element. T111 carries the phosphothreonine modification.

This sequence belongs to the profilin family. As to quaternary structure, occurs in many kinds of cells as a complex with monomeric actin in a 1:1 ratio. Post-translationally, phosphorylated by MAP kinases.

It localises to the cytoplasm. Its subcellular location is the cytoskeleton. Functionally, binds to actin and affects the structure of the cytoskeleton. At high concentrations, profilin prevents the polymerization of actin, whereas it enhances it at low concentrations. In Olea europaea (Common olive), this protein is Profilin-5.